The following is a 68-amino-acid chain: Large ribosomal subunit protein uL29 (68 aa).

This sequence belongs to the universal ribosomal protein uL29 family.

This Parvibaculum lavamentivorans (strain DS-1 / DSM 13023 / NCIMB 13966) protein is Large ribosomal subunit protein uL29.